Consider the following 147-residue polypeptide: Acidic phospholipase A2 beta-bungarotoxin A4 chain (147 aa).

The first 19 residues, 1–19, serve as a signal peptide directing secretion; the sequence is MNPAHLLVLSAVCVSLLGA. Residues 20 to 27 constitute a propeptide that is removed on maturation; that stretch reads ANIPPQHL. Cystine bridges form between C54-C146, C56-C72, C71-C127, C78-C120, C88-C113, and C106-C118. The Ca(2+) site is built by Y55, G57, and G59. H75 is an active-site residue. A Ca(2+)-binding site is contributed by D76. The active site involves D121.

Belongs to the phospholipase A2 family. Group I subfamily. D49 sub-subfamily. Heterodimer; disulfide-linked. The A chains have phospholipase A2 activity and the B chains show homology with the basic protease inhibitors. Ca(2+) serves as cofactor. Expressed by the venom gland.

The protein resides in the secreted. The enzyme catalyses a 1,2-diacyl-sn-glycero-3-phosphocholine + H2O = a 1-acyl-sn-glycero-3-phosphocholine + a fatty acid + H(+). Functionally, snake venom phospholipase A2 (PLA2) that inhibits neuromuscular transmission by blocking acetylcholine release from the nerve termini. PLA2 catalyzes the calcium-dependent hydrolysis of the 2-acyl groups in 3-sn-phosphoglycerides. The protein is Acidic phospholipase A2 beta-bungarotoxin A4 chain of Bungarus multicinctus (Many-banded krait).